Reading from the N-terminus, the 164-residue chain is 6,7-dimethyl-8-ribityllumazine synthase (164 aa).

5-amino-6-(D-ribitylamino)uracil-binding positions include F28, 62–64 (ALE), and 86–88 (AVI). 91-92 (ET) is a (2S)-2-hydroxy-3-oxobutyl phosphate binding site. Catalysis depends on H94, which acts as the Proton donor. Position 119 (N119) interacts with 5-amino-6-(D-ribitylamino)uracil. R133 provides a ligand contact to (2S)-2-hydroxy-3-oxobutyl phosphate.

This sequence belongs to the DMRL synthase family.

The enzyme catalyses (2S)-2-hydroxy-3-oxobutyl phosphate + 5-amino-6-(D-ribitylamino)uracil = 6,7-dimethyl-8-(1-D-ribityl)lumazine + phosphate + 2 H2O + H(+). It functions in the pathway cofactor biosynthesis; riboflavin biosynthesis; riboflavin from 2-hydroxy-3-oxobutyl phosphate and 5-amino-6-(D-ribitylamino)uracil: step 1/2. Its function is as follows. Catalyzes the formation of 6,7-dimethyl-8-ribityllumazine by condensation of 5-amino-6-(D-ribitylamino)uracil with 3,4-dihydroxy-2-butanone 4-phosphate. This is the penultimate step in the biosynthesis of riboflavin. The polypeptide is 6,7-dimethyl-8-ribityllumazine synthase (Nitrosomonas europaea (strain ATCC 19718 / CIP 103999 / KCTC 2705 / NBRC 14298)).